Here is a 151-residue protein sequence, read N- to C-terminus: 3-hydroxyacyl-[acyl-carrier-protein] dehydratase FabZ (151 aa).

Residue histidine 49 is part of the active site.

Belongs to the thioester dehydratase family. FabZ subfamily.

The protein localises to the cytoplasm. The enzyme catalyses a (3R)-hydroxyacyl-[ACP] = a (2E)-enoyl-[ACP] + H2O. In terms of biological role, involved in unsaturated fatty acids biosynthesis. Catalyzes the dehydration of short chain beta-hydroxyacyl-ACPs and long chain saturated and unsaturated beta-hydroxyacyl-ACPs. This chain is 3-hydroxyacyl-[acyl-carrier-protein] dehydratase FabZ, found in Bordetella parapertussis (strain 12822 / ATCC BAA-587 / NCTC 13253).